Here is a 626-residue protein sequence, read N- to C-terminus: Ankyrin repeat domain-containing protein 13B (626 aa).

N-acetylmethionine is present on methionine 1. 2 ANK repeats span residues 47–76 and 80–109; these read RGRTPLHLATTLGHLECARVLLAHGADVGR and SGWTVLQEAVSTRDLELVQLVLRYRDYQRV. The interval 442 to 470 is disordered; that stretch reads PVPSVRGSPGSETPSPGSDSSSVSSSSST. The segment covering 448–470 has biased composition (low complexity); it reads GSPGSETPSPGSDSSSVSSSSST. The UIM 1 domain occupies 503–522; the sequence is EDDDLLRFAIQQSLLEAGSE. Positions 534-614 are disordered; sequence NSKPGTHPMS…RRRVRQEEEE (81 aa). Pro residues predominate over residues 554 to 575; it reads PPTPQRQPMPPAPVPSPRPSPG. UIM domains are found at residues 585 to 604 and 610 to 626; these read SYDEQLRLAMELSAQEQEER and QEEEELERILRLSLTEQ.

In terms of assembly, interacts with EGFR (ubiquitinated); the interaction is direct and may regulate EGFR internalization.

The protein localises to the cell membrane. The protein resides in the late endosome. Its subcellular location is the early endosome. In terms of biological role, ubiquitin-binding protein that specifically recognizes and binds 'Lys-63'-linked ubiquitin. Does not bind 'Lys-48'-linked ubiquitin. Positively regulates the internalization of ligand-activated EGFR by binding to the Ub moiety of ubiquitinated EGFR at the cell membrane. In Mus musculus (Mouse), this protein is Ankyrin repeat domain-containing protein 13B (Ankrd13b).